The chain runs to 106 residues: UPF0145 protein Pput_2816 (106 aa).

Belongs to the UPF0145 family.

The sequence is that of UPF0145 protein Pput_2816 from Pseudomonas putida (strain ATCC 700007 / DSM 6899 / JCM 31910 / BCRC 17059 / LMG 24140 / F1).